A 279-amino-acid chain; its full sequence is Large ribosomal subunit protein mL46 (279 aa).

Lysine 230 carries the post-translational modification N6-acetyllysine.

It belongs to the mitochondrion-specific ribosomal protein mL46 family. In terms of assembly, component of the mitochondrial ribosome large subunit (39S) which comprises a 16S rRNA and about 50 distinct proteins.

Its subcellular location is the mitochondrion. The protein is Large ribosomal subunit protein mL46 (MRPL46) of Pongo abelii (Sumatran orangutan).